The sequence spans 299 residues: Recombination-associated protein RdgC (299 aa).

Belongs to the RdgC family.

Its subcellular location is the cytoplasm. It localises to the nucleoid. Its function is as follows. May be involved in recombination. This chain is Recombination-associated protein RdgC, found in Neisseria meningitidis serogroup B (strain ATCC BAA-335 / MC58).